The sequence spans 798 residues: Neuroligin-1 (798 aa).

Positions 1–17 (MERIYLLLLLFLPRIRS) are cleaved as a signal peptide. The Extracellular portion of the chain corresponds to 18–685 (YDVRSVTTSW…AAGSFTGKAL (668 aa)). C86 and C125 form a disulfide bridge. N-linked (GlcNAc...) asparagine glycans are attached at residues N164, N292, and N315. A disulfide bridge links C288 with C307. Residues 636-676 (ANLPFPPPPMPPSPPPELTTKPKPSESPTTLQTTTESEKAA) form a disordered region. The segment covering 639-652 (PFPPPPMPPSPPPE) has biased composition (pro residues). Low complexity predominate over residues 653-665 (LTTKPKPSESPTT). Residues 686–706 (GGVIFIGCGFLIMNVCLLIAV) traverse the membrane as a helical segment. The Cytoplasmic segment spans residues 707 to 798 (RREWGKKRRN…QAPTLEEIQV (92 aa)). The segment at 731-765 (HGGGAEQYNSLNSPEPLLSASHKNSTSMRPAGISP) is disordered.

It belongs to the type-B carboxylesterase/lipase family. Interacts (via extracellular domain) with isoform b of madd-4; the interaction is required for the localization to postsynaptic domains. Interacts with unc-49.

The protein resides in the cell membrane. It localises to the synapse. Probable neuronal cell surface protein thought to be involved in cell-cell-interactions by forming intercellular junctions through binding to beta-neurexins. Plays a role in the clustering of the GABA(A) receptor unc-49 at postsynaptic sites in neuromuscular junctions (NMJs) via the interaction with madd-4 and neurexin nrx-1 and is thereby required for normal GABAergic synaptic transmission. The chain is Neuroligin-1 (nlg-1) from Caenorhabditis elegans.